Consider the following 266-residue polypeptide: Small ribosomal subunit protein uS2 (266 aa).

The disordered stretch occupies residues glutamate 247–asparagine 266. Positions glutamate 249–tryptophan 258 are enriched in polar residues.

The protein belongs to the universal ribosomal protein uS2 family.

The sequence is that of Small ribosomal subunit protein uS2 from Mesoplasma florum (strain ATCC 33453 / NBRC 100688 / NCTC 11704 / L1) (Acholeplasma florum).